We begin with the raw amino-acid sequence, 138 residues long: Large ribosomal subunit protein uL16 (138 aa).

Residues 1 to 21 (MLIPRKVKHRKQHHPSLRGRA) are compositionally biased toward basic residues. Residues 1 to 22 (MLIPRKVKHRKQHHPSLRGRAK) form a disordered region.

This sequence belongs to the universal ribosomal protein uL16 family. As to quaternary structure, part of the 50S ribosomal subunit.

Binds 23S rRNA and is also seen to make contacts with the A and possibly P site tRNAs. In Thermobifida fusca (strain YX), this protein is Large ribosomal subunit protein uL16.